The following is a 600-amino-acid chain: MCGIVGYIGQNDTKEILLTGLEKLEYRGYDSAGIATLNDNGVHVTKVKGRIATLREDVDTTIDSTMGIGHTRWATHGVPSVMNAHPHQSTSERFTIVHNGVIENYNDIKNEYLADVSFISETDTEVIVQLIEKLHEKYQDTKKAFSEAMSLLKGSYAIGLIDAEDSETLYVSKNKSPLLVGLGDGFNLVASDAMATLRETDQYLEIFDKEIVLVSRNYVEVQTLDGQVVERKPFTAEIDASDTEKGTYPHFMLKEIDEQPIVMRKIIQEYQNDNGQLKLDQDIRTAMKDADRIYIIAAGTSYHAGLVGKEFIEKLANIPVEVHVASEFSYNMPLLSEKPLFVFISQSGETADSRAVLVKIKELGHPALTLTNVPGSTLSREANYTMHLHAGPEIAVASTKAYTAQIAVLAILAVDTARVKGLELDFEPLQELAIVANAMEVLTDQKEELEQLARDYFGTTRNAFFIGRSTDYHVAQEAALKLKEISYIQAEGFAGGELKHGTIALIEEGTPVIALTTQENVNYSIRGNVQEVVARGANAMVVSMKGLEQDEDAFVIPHVHELLTPLASVIPMQLLAYYAALHRDCDVDKPRNLAKSVTVE.

Catalysis depends on Cys2, which acts as the Nucleophile; for GATase activity. One can recognise a Glutamine amidotransferase type-2 domain in the interval 2–217 (CGIVGYIGQN…DKEIVLVSRN (216 aa)). SIS domains are found at residues 283-422 (IRTA…VKGL) and 452-590 (LARD…VDKP). Catalysis depends on Lys595, which acts as the For Fru-6P isomerization activity.

As to quaternary structure, homodimer.

Its subcellular location is the cytoplasm. It catalyses the reaction D-fructose 6-phosphate + L-glutamine = D-glucosamine 6-phosphate + L-glutamate. Catalyzes the first step in hexosamine metabolism, converting fructose-6P into glucosamine-6P using glutamine as a nitrogen source. The chain is Glutamine--fructose-6-phosphate aminotransferase [isomerizing] from Oceanobacillus iheyensis (strain DSM 14371 / CIP 107618 / JCM 11309 / KCTC 3954 / HTE831).